Consider the following 430-residue polypeptide: Adenylosuccinate synthetase (430 aa).

Residues 13–19 and 41–43 contribute to the GTP site; these read GDEGKGK and GHT. The active-site Proton acceptor is Asp-14. Mg(2+) is bound by residues Asp-14 and Gly-41. IMP-binding positions include 14–17, 39–42, Thr-130, Arg-144, Gln-225, Thr-240, and Arg-304; these read DEGK and NAGH. His-42 functions as the Proton donor in the catalytic mechanism. Position 300-306 (300-306) interacts with substrate; it reads STTGRAR. GTP is bound by residues Arg-306, 332-334, and 414-416; these read KLD and STG.

Belongs to the adenylosuccinate synthetase family. In terms of assembly, homodimer. The cofactor is Mg(2+).

It is found in the cytoplasm. It catalyses the reaction IMP + L-aspartate + GTP = N(6)-(1,2-dicarboxyethyl)-AMP + GDP + phosphate + 2 H(+). It functions in the pathway purine metabolism; AMP biosynthesis via de novo pathway; AMP from IMP: step 1/2. Functionally, plays an important role in the de novo pathway of purine nucleotide biosynthesis. Catalyzes the first committed step in the biosynthesis of AMP from IMP. The sequence is that of Adenylosuccinate synthetase from Alcanivorax borkumensis (strain ATCC 700651 / DSM 11573 / NCIMB 13689 / SK2).